The primary structure comprises 415 residues: G-protein coupled receptor daf-38 (415 aa).

Residues 1–19 show a composition bias toward low complexity; it reads MLLPSNLTTSTLMTSSSES. The tract at residues 1-25 is disordered; the sequence is MLLPSNLTTSTLMTSSSESYDADNP. Topologically, residues 1-35 are extracellular; sequence MLLPSNLTTSTLMTSSSESYDADNPGLPPEPILSD. Residues 36-56 traverse the membrane as a helical segment; it reads YVEMFTLVLNFIVGAPLNLAA. Topologically, residues 57–75 are cytoplasmic; the sequence is YTQLSERPTSTRLDLLKRS. A helical transmembrane segment spans residues 76–96; sequence LNYSDLLVLFIYVPSRACWLL. Residues 97-108 are Extracellular-facing; that stretch reads TYDWRGGDALCK. Cysteine 107 and cysteine 187 are disulfide-bonded. Residues 109 to 129 form a helical membrane-spanning segment; sequence IVKMFHTFAFQSSSNVIVCIA. The Cytoplasmic segment spans residues 130–152; it reads VDRLLSVLSPSHHSPNKALKRTK. The chain crosses the membrane as a helical span at residues 153–173; the sequence is MMLIVAWIVALVISCPQLFIW. At 174 to 222 the chain is on the extracellular side; it reads KAYLALPEYNWSQCLQIWEIARMEKFNKPQVVPEFDAEFWYSILHISLV. A helical membrane pass occupies residues 223–243; sequence FWIPCIIIMLSYIIVISWVWI. Over 244-345 the chain is Cytoplasmic; the sequence is NSRPSIRHTS…NLNRSRALRV (102 aa). The chain crosses the membrane as a helical span at residues 346 to 366; the sequence is SLLLVVAYIICWLPYNLISLI. The Extracellular portion of the chain corresponds to 367–382; that stretch reads QFLDRDFFSSYLKHVH. The helical transmembrane segment at 383–403 threads the bilayer; that stretch reads FCQQLIIFNSVVNPWLYGFFG. The Cytoplasmic segment spans residues 404-415; it reads PRRPSTTGAGRH.

The protein belongs to the G-protein coupled receptor 1 family. Heterodimer; with daf-37. As to expression, expressed in the ASI and ASK chemosensory neurons and in the IL-2 interneurons, but weakly expressed in other head neurons in hermaphrodites.

Its subcellular location is the cell membrane. G-protein coupled receptor (GPCR) that forms a heterodimer with daf-37 to control dauer formation and behavior. Required for the response to dauer inducing pheromones such as the ascarosides ascr#2, ascr#3 and ascr#5. In Caenorhabditis elegans, this protein is G-protein coupled receptor daf-38.